Reading from the N-terminus, the 603-residue chain is NADH-ubiquinone oxidoreductase chain 5 (603 aa).

The next 17 membrane-spanning stretches (helical) occupy residues 4–24, 38–58, 87–107, 114–134, 140–160, 171–191, 210–230, 241–261, 272–292, 301–320, 325–347, 370–390, 407–429, 457–477, 482–502, 537–557, and 582–602; these read YATMTTLALTSLIPPILTTFI, SIVASTFIISLFPTTMFLCLD, MMFIPVALFVTWSIMEFSLWY, INQFFKYLLIFLITMLILVTA, LFIGWEGVGIMSFLLIGWWYA, AILYNRIGDIGFILALAWFLL, LIPLLGFLLAAAGKSAQLGLH, TPVSALLHSSTMVVAGVFLLI, LAQTLTLCLGAITTLFAAVCA, IVAFSTSSQLGLMVATIGIG, AFLHICTHAFFKAMLFMCSGSII, STSLAIGSLALMGMPFLTGFY, WALSIILIATSLTSAYSTRMILL, LTIGSLFAGFFITNNILPTSV, IPLYLKLTALSITLLGLLTAL, IPYLGLLMSQNLPLLLLDLIW, and GLIKLYFLSFFFPLLLILLLI.

This sequence belongs to the complex I subunit 5 family. In terms of assembly, core subunit of respiratory chain NADH dehydrogenase (Complex I) which is composed of 45 different subunits.

It localises to the mitochondrion inner membrane. It catalyses the reaction a ubiquinone + NADH + 5 H(+)(in) = a ubiquinol + NAD(+) + 4 H(+)(out). Functionally, core subunit of the mitochondrial membrane respiratory chain NADH dehydrogenase (Complex I) which catalyzes electron transfer from NADH through the respiratory chain, using ubiquinone as an electron acceptor. Essential for the catalytic activity and assembly of complex I. The polypeptide is NADH-ubiquinone oxidoreductase chain 5 (MT-ND5) (Gorilla gorilla gorilla (Western lowland gorilla)).